Consider the following 864-residue polypeptide: Protein PAT1 homolog 1 (864 aa).

Over residues 427–439 (PPNSRPNGPQFSG) the composition is skewed to polar residues. 3 disordered regions span residues 427–460 (PPNSRPNGPQFSGPQVGPHSPGARGQQRRNSGMP), 518–539 (WTAHPKPESKQPLPASSESRKD), and 551–602 (EMQK…STHN). A compositionally biased stretch (basic and acidic residues) spans 551–580 (EMQKERLRDREKERQRERQERIDRGEERKP).

Belongs to the PAT1 family.

The protein localises to the cytoplasm. The protein resides in the P-body. In terms of biological role, RNA-binding protein involved in deadenylation-dependent decapping of mRNAs, leading to the degradation of mRNAs. Acts as a scaffold protein that connects deadenylation and decapping machinery. Required for the recruitment of P-body components such as cgh-1 in somatic blastomeres. May play a role in recruiting the decapping enzyme dcap-1 to cytoplasmic puncta in the cell body of the posterior touch receptor neuron, PLM. This Caenorhabditis briggsae protein is Protein PAT1 homolog 1 (patr-1).